Reading from the N-terminus, the 71-residue chain is DNA-directed RNA polymerase subunit epsilon (71 aa).

It belongs to the RNA polymerase subunit epsilon family. Monomer. RNAP is composed of a core of 2 alpha, a beta and a beta' subunit. The core is associated with a delta subunit, and at least one of epsilon or omega. When a sigma factor is associated with the core the holoenzyme is formed, which can initiate transcription.

The catalysed reaction is RNA(n) + a ribonucleoside 5'-triphosphate = RNA(n+1) + diphosphate. Functionally, a non-essential component of RNA polymerase (RNAP). Has a similar structure to bacteriophage T7 protein Gp2 (AC P03704), which is known to bind to RNAP in the DNA binding-cleft. Unlike Gp2 however, this protein does not inhibit transcription initiation. This Geobacillus stearothermophilus (strain DSM 13240 / CIP 106956 / 10) protein is DNA-directed RNA polymerase subunit epsilon.